The chain runs to 132 residues: Phosphoribosyl-AMP cyclohydrolase (132 aa).

Asp79 is a binding site for Mg(2+). Zn(2+) is bound at residue Cys80. Residues Asp81 and Asp83 each coordinate Mg(2+). Residues Cys100 and Cys107 each contribute to the Zn(2+) site.

It belongs to the PRA-CH family. Homodimer. The cofactor is Mg(2+). Zn(2+) serves as cofactor.

It localises to the cytoplasm. The catalysed reaction is 1-(5-phospho-beta-D-ribosyl)-5'-AMP + H2O = 1-(5-phospho-beta-D-ribosyl)-5-[(5-phospho-beta-D-ribosylamino)methylideneamino]imidazole-4-carboxamide. It functions in the pathway amino-acid biosynthesis; L-histidine biosynthesis; L-histidine from 5-phospho-alpha-D-ribose 1-diphosphate: step 3/9. Functionally, catalyzes the hydrolysis of the adenine ring of phosphoribosyl-AMP. The chain is Phosphoribosyl-AMP cyclohydrolase from Delftia acidovorans (strain DSM 14801 / SPH-1).